Here is a 431-residue protein sequence, read N- to C-terminus: 3-phosphoshikimate 1-carboxyvinyltransferase (431 aa).

Residues K23, S24, and R28 each coordinate 3-phosphoshikimate. K23 is a phosphoenolpyruvate binding site. G96 and R124 together coordinate phosphoenolpyruvate. 3-phosphoshikimate-binding residues include S169, Q171, D317, and K344. Residue Q171 coordinates phosphoenolpyruvate. Catalysis depends on D317, which acts as the Proton acceptor. The phosphoenolpyruvate site is built by R348 and R390.

It belongs to the EPSP synthase family. Monomer.

Its subcellular location is the cytoplasm. It carries out the reaction 3-phosphoshikimate + phosphoenolpyruvate = 5-O-(1-carboxyvinyl)-3-phosphoshikimate + phosphate. It participates in metabolic intermediate biosynthesis; chorismate biosynthesis; chorismate from D-erythrose 4-phosphate and phosphoenolpyruvate: step 6/7. In terms of biological role, catalyzes the transfer of the enolpyruvyl moiety of phosphoenolpyruvate (PEP) to the 5-hydroxyl of shikimate-3-phosphate (S3P) to produce enolpyruvyl shikimate-3-phosphate and inorganic phosphate. This is 3-phosphoshikimate 1-carboxyvinyltransferase from Syntrophotalea carbinolica (strain DSM 2380 / NBRC 103641 / GraBd1) (Pelobacter carbinolicus).